A 581-amino-acid polypeptide reads, in one-letter code: Probable CDP-diacylglycerol--glycerol-3-phosphate 3-phosphatidyltransferase (581 aa).

The segment at 27–65 (RSATTTTTTTTKACGNGSSQSPPSTPLLSSKSSTITSNK) is disordered. The span at 44–65 (SSQSPPSTPLLSSKSSTITSNK) shows a compositional bias: low complexity. 160 to 167 (ASLYLGTS) contributes to the ATP binding site. PLD phosphodiesterase domains are found at residues 248–274 (TIGV…SKDY) and 487–520 (DKWT…GSRS). Catalysis depends on residues His-253, Lys-255, and Asp-260.

Belongs to the CDP-alcohol phosphatidyltransferase class-II family.

It catalyses the reaction a CDP-1,2-diacyl-sn-glycerol + sn-glycerol 3-phosphate = a 1,2-diacyl-sn-glycero-3-phospho-(1'-sn-glycero-3'-phosphate) + CMP + H(+). The protein operates within phospholipid metabolism; phosphatidylglycerol biosynthesis; phosphatidylglycerol from CDP-diacylglycerol: step 1/2. Its function is as follows. Functions in the biosynthesis of the anionic phospholipids phosphatidylglycerol and cardiolipin. The polypeptide is Probable CDP-diacylglycerol--glycerol-3-phosphate 3-phosphatidyltransferase (pgs1) (Dictyostelium discoideum (Social amoeba)).